We begin with the raw amino-acid sequence, 222 residues long: Glutathione S-transferase U21 (222 aa).

One can recognise a GST N-terminal domain in the interval 3 to 83; the sequence is AEVILLGFWP…YIDEVWSDNN (81 aa). Glutathione is bound by residues 13–14, 40–41, 54–55, and 67–68; these read SM, NK, TI, and ES. One can recognise a GST C-terminal domain in the interval 89–211; that stretch reads DPYHRAQALF…LPDSEKVVGY (123 aa).

It belongs to the GST superfamily. Tau family.

The protein localises to the cytoplasm. It is found in the cytosol. It carries out the reaction RX + glutathione = an S-substituted glutathione + a halide anion + H(+). Its function is as follows. May be involved in the conjugation of reduced glutathione to a wide number of exogenous and endogenous hydrophobic electrophiles and have a detoxification role against certain herbicides. The chain is Glutathione S-transferase U21 (GSTU21) from Arabidopsis thaliana (Mouse-ear cress).